Consider the following 104-residue polypeptide: Small ribosomal subunit protein uS10 (104 aa).

The protein belongs to the universal ribosomal protein uS10 family. Part of the 30S ribosomal subunit.

Involved in the binding of tRNA to the ribosomes. This Ralstonia nicotianae (strain ATCC BAA-1114 / GMI1000) (Ralstonia solanacearum) protein is Small ribosomal subunit protein uS10.